A 287-amino-acid chain; its full sequence is MAEITAALVKELRERTGEGMMDCKKALTKAGGDIEKAIDDMRASGAIKAAKKAGNVAAEGAIAIKDDGKAAVIIEVNSQTDFLALQDDFKNFVAASVEKAFADKLTDVAPLIEAQETARLVLVGKVGENVNIRRLKRIEGDVVGSYLHGNKIGVVVTLKGGNVELAKDIAMHVAASNPEFLFPSEVSAEAIEREKSVFLQLNEDKIKGKPAEIVEKMVGGRITKFLAEASLVEQAFVKNPEIKVGDLAKKAGAEIVSFTYFKVGEGIEKPVDNFADEVAAQLAAAKQ.

Residues 80–83 (TDFL) are involved in Mg(2+) ion dislocation from EF-Tu.

The protein belongs to the EF-Ts family.

It localises to the cytoplasm. Its function is as follows. Associates with the EF-Tu.GDP complex and induces the exchange of GDP to GTP. It remains bound to the aminoacyl-tRNA.EF-Tu.GTP complex up to the GTP hydrolysis stage on the ribosome. The protein is Elongation factor Ts of Pseudomonas syringae pv. tomato (strain ATCC BAA-871 / DC3000).